The following is a 604-amino-acid chain: Aspartate--tRNA(Asp/Asn) ligase (604 aa).

An L-aspartate-binding site is contributed by Glu-175. The segment at 199–202 (QQFK) is aspartate. L-aspartate is bound by residues Arg-221 and His-456. 221–223 (RDE) is a binding site for ATP. An ATP-binding site is contributed by Glu-496. Position 503 (Arg-503) interacts with L-aspartate. Position 548-551 (548-551 (GVDR)) interacts with ATP.

The protein belongs to the class-II aminoacyl-tRNA synthetase family. Type 1 subfamily. Homodimer.

It is found in the cytoplasm. It catalyses the reaction tRNA(Asx) + L-aspartate + ATP = L-aspartyl-tRNA(Asx) + AMP + diphosphate. Aspartyl-tRNA synthetase with relaxed tRNA specificity since it is able to aspartylate not only its cognate tRNA(Asp) but also tRNA(Asn). Reaction proceeds in two steps: L-aspartate is first activated by ATP to form Asp-AMP and then transferred to the acceptor end of tRNA(Asp/Asn). The polypeptide is Aspartate--tRNA(Asp/Asn) ligase (Methylorubrum extorquens (strain CM4 / NCIMB 13688) (Methylobacterium extorquens)).